Consider the following 303-residue polypeptide: Aspartate carbamoyltransferase catalytic subunit (303 aa).

Residues R49 and T50 each coordinate carbamoyl phosphate. Position 77 (K77) interacts with L-aspartate. Carbamoyl phosphate is bound by residues R99, H126, and Q129. Residues R159 and R211 each contribute to the L-aspartate site. 2 residues coordinate carbamoyl phosphate: S252 and P253.

The protein belongs to the aspartate/ornithine carbamoyltransferase superfamily. ATCase family. As to quaternary structure, heterododecamer (2C3:3R2) of six catalytic PyrB chains organized as two trimers (C3), and six regulatory PyrI chains organized as three dimers (R2).

It catalyses the reaction carbamoyl phosphate + L-aspartate = N-carbamoyl-L-aspartate + phosphate + H(+). It functions in the pathway pyrimidine metabolism; UMP biosynthesis via de novo pathway; (S)-dihydroorotate from bicarbonate: step 2/3. In terms of biological role, catalyzes the condensation of carbamoyl phosphate and aspartate to form carbamoyl aspartate and inorganic phosphate, the committed step in the de novo pyrimidine nucleotide biosynthesis pathway. The polypeptide is Aspartate carbamoyltransferase catalytic subunit (Listeria welshimeri serovar 6b (strain ATCC 35897 / DSM 20650 / CCUG 15529 / CIP 8149 / NCTC 11857 / SLCC 5334 / V8)).